Reading from the N-terminus, the 83-residue chain is Large ribosomal subunit protein uL23 (83 aa).

The protein belongs to the universal ribosomal protein uL23 family. In terms of assembly, part of the 50S ribosomal subunit. Contacts protein L29.

Binds to 23S rRNA. One of the proteins that surrounds the polypeptide exit tunnel on the outside of the ribosome. The protein is Large ribosomal subunit protein uL23 of Archaeoglobus fulgidus (strain ATCC 49558 / DSM 4304 / JCM 9628 / NBRC 100126 / VC-16).